The chain runs to 234 residues: Leucyl/phenylalanyl-tRNA--protein transferase (234 aa).

This sequence belongs to the L/F-transferase family.

The protein resides in the cytoplasm. It catalyses the reaction N-terminal L-lysyl-[protein] + L-leucyl-tRNA(Leu) = N-terminal L-leucyl-L-lysyl-[protein] + tRNA(Leu) + H(+). The catalysed reaction is N-terminal L-arginyl-[protein] + L-leucyl-tRNA(Leu) = N-terminal L-leucyl-L-arginyl-[protein] + tRNA(Leu) + H(+). It carries out the reaction L-phenylalanyl-tRNA(Phe) + an N-terminal L-alpha-aminoacyl-[protein] = an N-terminal L-phenylalanyl-L-alpha-aminoacyl-[protein] + tRNA(Phe). In terms of biological role, functions in the N-end rule pathway of protein degradation where it conjugates Leu, Phe and, less efficiently, Met from aminoacyl-tRNAs to the N-termini of proteins containing an N-terminal arginine or lysine. In Hahella chejuensis (strain KCTC 2396), this protein is Leucyl/phenylalanyl-tRNA--protein transferase.